The following is a 61-amino-acid chain: Disintegrin atroxatin (61 aa).

One can recognise a Disintegrin domain in the interval N1–G61. Disulfide bonds link C3–C26, C9–C23, C17–C23, C22–C47, and C35–C54. Residues R39–D41 carry the Cell attachment site motif.

This sequence belongs to the venom metalloproteinase (M12B) family. P-II subfamily. P-IIa sub-subfamily. In terms of assembly, monomer (disintegrin). In terms of tissue distribution, expressed by the venom gland.

It is found in the secreted. Functionally, inhibits fibrinogen interaction with platelets. Acts by binding to alpha-IIb/beta-3 (ITGA2B/ITGB3) on the platelet surface and inhibits aggregation induced by ADP, thrombin, platelet-activating factor and collagen. This Crotalus atrox (Western diamondback rattlesnake) protein is Disintegrin atroxatin.